Reading from the N-terminus, the 44-residue chain is Cytochrome b559 subunit beta (44 aa).

The helical transmembrane segment at 19-35 threads the bilayer; it reads WLAIHGLAIPTVFFLGA. His23 is a binding site for heme.

It belongs to the PsbE/PsbF family. As to quaternary structure, heterodimer of an alpha subunit and a beta subunit. PSII is composed of 1 copy each of membrane proteins PsbA, PsbB, PsbC, PsbD, PsbE, PsbF, PsbH, PsbI, PsbJ, PsbK, PsbL, PsbM, PsbT, PsbX, PsbY, PsbZ, Psb30/Ycf12, at least 3 peripheral proteins of the oxygen-evolving complex and a large number of cofactors. It forms dimeric complexes. Heme b serves as cofactor.

It localises to the plastid. Its subcellular location is the chloroplast thylakoid membrane. In terms of biological role, this b-type cytochrome is tightly associated with the reaction center of photosystem II (PSII). PSII is a light-driven water:plastoquinone oxidoreductase that uses light energy to abstract electrons from H(2)O, generating O(2) and a proton gradient subsequently used for ATP formation. It consists of a core antenna complex that captures photons, and an electron transfer chain that converts photonic excitation into a charge separation. This Porphyra purpurea (Red seaweed) protein is Cytochrome b559 subunit beta.